The chain runs to 255 residues: Imidazole glycerol phosphate synthase subunit HisF (255 aa).

Active-site residues include Asp-12 and Asp-131.

The protein belongs to the HisA/HisF family. In terms of assembly, heterodimer of HisH and HisF.

Its subcellular location is the cytoplasm. It carries out the reaction 5-[(5-phospho-1-deoxy-D-ribulos-1-ylimino)methylamino]-1-(5-phospho-beta-D-ribosyl)imidazole-4-carboxamide + L-glutamine = D-erythro-1-(imidazol-4-yl)glycerol 3-phosphate + 5-amino-1-(5-phospho-beta-D-ribosyl)imidazole-4-carboxamide + L-glutamate + H(+). The protein operates within amino-acid biosynthesis; L-histidine biosynthesis; L-histidine from 5-phospho-alpha-D-ribose 1-diphosphate: step 5/9. Its function is as follows. IGPS catalyzes the conversion of PRFAR and glutamine to IGP, AICAR and glutamate. The HisF subunit catalyzes the cyclization activity that produces IGP and AICAR from PRFAR using the ammonia provided by the HisH subunit. The polypeptide is Imidazole glycerol phosphate synthase subunit HisF (Neisseria gonorrhoeae (strain ATCC 700825 / FA 1090)).